We begin with the raw amino-acid sequence, 365 residues long: S-adenosylmethionine:tRNA ribosyltransferase-isomerase (365 aa).

It belongs to the QueA family. Monomer.

It localises to the cytoplasm. The catalysed reaction is 7-aminomethyl-7-carbaguanosine(34) in tRNA + S-adenosyl-L-methionine = epoxyqueuosine(34) in tRNA + adenine + L-methionine + 2 H(+). It participates in tRNA modification; tRNA-queuosine biosynthesis. Its function is as follows. Transfers and isomerizes the ribose moiety from AdoMet to the 7-aminomethyl group of 7-deazaguanine (preQ1-tRNA) to give epoxyqueuosine (oQ-tRNA). This Prochlorococcus marinus (strain NATL2A) protein is S-adenosylmethionine:tRNA ribosyltransferase-isomerase.